A 232-amino-acid polypeptide reads, in one-letter code: 5'-methylthioadenosine/S-adenosylhomocysteine nucleosidase (232 aa).

Residue Glu12 is the Proton acceptor of the active site. Substrate-binding positions include Gly78, Ile152, and 173 to 174 (ME). Asp197 (proton donor) is an active-site residue.

This sequence belongs to the PNP/UDP phosphorylase family. MtnN subfamily. In terms of assembly, homodimer.

It carries out the reaction S-adenosyl-L-homocysteine + H2O = S-(5-deoxy-D-ribos-5-yl)-L-homocysteine + adenine. The enzyme catalyses S-methyl-5'-thioadenosine + H2O = 5-(methylsulfanyl)-D-ribose + adenine. It catalyses the reaction 5'-deoxyadenosine + H2O = 5-deoxy-D-ribose + adenine. It functions in the pathway amino-acid biosynthesis; L-methionine biosynthesis via salvage pathway; S-methyl-5-thio-alpha-D-ribose 1-phosphate from S-methyl-5'-thioadenosine (hydrolase route): step 1/2. In terms of biological role, catalyzes the irreversible cleavage of the glycosidic bond in both 5'-methylthioadenosine (MTA) and S-adenosylhomocysteine (SAH/AdoHcy) to adenine and the corresponding thioribose, 5'-methylthioribose and S-ribosylhomocysteine, respectively. Also cleaves 5'-deoxyadenosine, a toxic by-product of radical S-adenosylmethionine (SAM) enzymes, into 5-deoxyribose and adenine. Thus, is required for in vivo function of the radical SAM enzymes biotin synthase and lipoic acid synthase, that are inhibited by 5'-deoxyadenosine accumulation. The chain is 5'-methylthioadenosine/S-adenosylhomocysteine nucleosidase from Salmonella paratyphi A (strain ATCC 9150 / SARB42).